The primary structure comprises 282 residues: Dof zinc finger protein 4 (282 aa).

The segment at 45-99 (VKCPRCESTNTKFCYYNNYNLSQPRHFCKSCRRYWTKGGVLRNVPVGGGCRKTKR) adopts a Dof-type zinc-finger fold. Zn(2+) is bound by residues cysteine 47, cysteine 50, cysteine 72, and cysteine 75. Residues 89–161 (PVGGGCRKTK…TTPATPSSNT (73 aa)) form a disordered region. Composition is skewed to low complexity over residues 102 to 117 (SSSAASSAPSTPTAAT) and 125 to 161 (RASASSPRSSSGGSGNTSPTAAAATTPTTPATPSSNT).

It is found in the nucleus. Transcription factor that may transactivate seed storage protein genes in developing seeds. In Oryza sativa subsp. japonica (Rice), this protein is Dof zinc finger protein 4.